Here is a 597-residue protein sequence, read N- to C-terminus: MPLFILTETSAGYGLFKAADKKLLSSDNLAERLNSVEKITKEIKYKEFAKFESAATALEEIAGVVEGKVTPKLNSLLAEIGNEKKVTLAVAESKLGAAINKIPNLDIQPIADSTTTDLFRAIRQYLPELIPGMLPENFKEMSLGLSHSLSRHKLKFSPEKVDVMIVHAVSLLDELDKELNTYAMRVKEWYGWHFPELAKILPDNLSYARIIVTMGMRSNATTADLSEILPHEIEAAVKAAADISMGTEVSEEDLQNIKYLAERVIDYSVYRKQLSDYLENRMRAIAPNMTELVGALVGARLIAHAGSVMNLAKNPGSTIQILGAEKALFRALKTKHATPKYGLIYHASLVGQASGANKGKMARQLASKVALGVRTDALAEFPEDADDETRASLGIRSRAKLENNLRQLEGKPIASKGVSVGPNGIPVASAPKWDIKEARKYNIDADGLAADAEAPKKPLIQEVEMQDAPADEDEEMKDVSKKSKKDKKEKKEKKDKKAKKELDDEDFERLAKAAGMSVDKFKRRFERGQISIKEDGTLEILSKKDFKGKDAEAEEEAEEEEKPAKKSKSSKRKAEAEEEETTKEEKPKKKKKKSSKE.

In terms of domain architecture, Nop spans 285 to 410 (IAPNMTELVG…LENNLRQLEG (126 aa)). Residues 452 to 597 (AEAPKKPLIQ…KKKKKKSSKE (146 aa)) are disordered. Positions 482–499 (KSKKDKKEKKEKKDKKAK) are enriched in basic residues. The segment covering 532–551 (IKEDGTLEILSKKDFKGKDA) has biased composition (basic and acidic residues). Residues 552 to 561 (EAEEEAEEEE) show a composition bias toward acidic residues. Residues 588–597 (KKKKKKSSKE) are compositionally biased toward basic residues.

The protein belongs to the NOP5/NOP56 family.

It localises to the nucleus. Its subcellular location is the nucleolus. Functionally, required for pre-18S rRNA processing. May bind microtubules. The polypeptide is Nucleolar protein 58 (nop-58) (Neurospora crassa (strain ATCC 24698 / 74-OR23-1A / CBS 708.71 / DSM 1257 / FGSC 987)).